The primary structure comprises 495 residues: ATP-NADH kinase YEF1 (495 aa).

The disordered stretch occupies residues 442 to 480; that stretch reads KYRLDSSKNGNDTISNPLESSCISSDAQDEERKSVTETE. Residues 448–467 show a composition bias toward polar residues; sequence SKNGNDTISNPLESSCISSD.

It belongs to the NAD kinase family. As to quaternary structure, homooctamer. Mg(2+) is required as a cofactor. Mn(2+) serves as cofactor. It depends on Co(2+) as a cofactor. The cofactor is Ca(2+).

It catalyses the reaction NADH + ATP = ADP + NADPH + H(+). Its function is as follows. ATP-NADH kinase with a low phosphorylation activity of both NADH and NAD(+) to produce NADP and NADPH by using ATP. UTR1 is responsible for essentially all of the NAD/NADH kinase activity resident in the cytoplasm, whereas POS5 is responsible for all mitochondrial NAD/NADH kinase activity and consequent mitochondrial genome maintenance. YEF1 can substitute for UTR1 when overexpressed. This is ATP-NADH kinase YEF1 (YEF1) from Saccharomyces cerevisiae (strain ATCC 204508 / S288c) (Baker's yeast).